A 210-amino-acid polypeptide reads, in one-letter code: uncharacterized protein (210 aa).

A run of 5 helical transmembrane segments spans residues 42-62, 66-86, 126-146, 147-167, and 189-209; these read ITLG…VLFV, ALHG…GFLM, VVVY…EMWQ, IILA…VISL, and AGIV…NEII.

This sequence belongs to the Rht family.

The protein resides in the cell membrane. This is an uncharacterized protein from Haemophilus influenzae (strain ATCC 51907 / DSM 11121 / KW20 / Rd).